Here is a 79-residue protein sequence, read N- to C-terminus: Large ribosomal subunit protein uL24 (79 aa).

Belongs to the universal ribosomal protein uL24 family. Part of the 50S ribosomal subunit.

One of two assembly initiator proteins, it binds directly to the 5'-end of the 23S rRNA, where it nucleates assembly of the 50S subunit. Its function is as follows. One of the proteins that surrounds the polypeptide exit tunnel on the outside of the subunit. This chain is Large ribosomal subunit protein uL24, found in Lactobacillus delbrueckii subsp. bulgaricus (strain ATCC BAA-365 / Lb-18).